Consider the following 141-residue polypeptide: Large ribosomal subunit protein uL11 (141 aa).

Belongs to the universal ribosomal protein uL11 family. Part of the ribosomal stalk of the 50S ribosomal subunit. Interacts with L10 and the large rRNA to form the base of the stalk. L10 forms an elongated spine to which L12 dimers bind in a sequential fashion forming a multimeric L10(L12)X complex. One or more lysine residues are methylated.

Functionally, forms part of the ribosomal stalk which helps the ribosome interact with GTP-bound translation factors. The sequence is that of Large ribosomal subunit protein uL11 from Chlamydia trachomatis serovar A (strain ATCC VR-571B / DSM 19440 / HAR-13).